The chain runs to 385 residues: 1-deoxy-D-xylulose 5-phosphate reductoisomerase (385 aa).

The NADPH site is built by threonine 11, glycine 12, serine 13, isoleucine 14, alanine 37, arginine 38, asparagine 39, and asparagine 123. Lysine 124 serves as a coordination point for 1-deoxy-D-xylulose 5-phosphate. NADPH is bound at residue glutamate 125. A Mn(2+)-binding site is contributed by aspartate 149. 4 residues coordinate 1-deoxy-D-xylulose 5-phosphate: serine 150, glutamate 151, serine 173, and histidine 196. Glutamate 151 is a binding site for Mn(2+). Glycine 202 lines the NADPH pocket. 1-deoxy-D-xylulose 5-phosphate contacts are provided by serine 209, asparagine 214, lysine 215, and glutamate 218. Glutamate 218 is a binding site for Mn(2+).

It belongs to the DXR family. Mg(2+) is required as a cofactor. Requires Mn(2+) as cofactor.

The catalysed reaction is 2-C-methyl-D-erythritol 4-phosphate + NADP(+) = 1-deoxy-D-xylulose 5-phosphate + NADPH + H(+). It participates in isoprenoid biosynthesis; isopentenyl diphosphate biosynthesis via DXP pathway; isopentenyl diphosphate from 1-deoxy-D-xylulose 5-phosphate: step 1/6. Catalyzes the NADPH-dependent rearrangement and reduction of 1-deoxy-D-xylulose-5-phosphate (DXP) to 2-C-methyl-D-erythritol 4-phosphate (MEP). The sequence is that of 1-deoxy-D-xylulose 5-phosphate reductoisomerase from Moorella thermoacetica (strain ATCC 39073 / JCM 9320).